Consider the following 502-residue polypeptide: Lysine--tRNA ligase (502 aa).

Glutamate 403 and glutamate 410 together coordinate Mg(2+).

The protein belongs to the class-II aminoacyl-tRNA synthetase family. As to quaternary structure, homodimer. It depends on Mg(2+) as a cofactor.

Its subcellular location is the cytoplasm. The catalysed reaction is tRNA(Lys) + L-lysine + ATP = L-lysyl-tRNA(Lys) + AMP + diphosphate. The sequence is that of Lysine--tRNA ligase from Synechococcus sp. (strain CC9902).